The following is an 82-amino-acid chain: Small ribosomal subunit protein eS27B (82 aa).

A C4-type zinc finger spans residues 37 to 59 (CPGCLNITTVFSHAQTAVTCESC).

This sequence belongs to the eukaryotic ribosomal protein eS27 family. As to quaternary structure, component of the small ribosomal subunit (SSU). Mature yeast ribosomes consist of a small (40S) and a large (60S) subunit. The 40S small subunit contains 1 molecule of ribosomal RNA (18S rRNA) and 33 different proteins (encoded by 57 genes). The large 60S subunit contains 3 rRNA molecules (25S, 5.8S and 5S rRNA) and 46 different proteins (encoded by 81 genes). Zn(2+) serves as cofactor. The N-terminus is not modified.

The protein resides in the cytoplasm. Functionally, component of the ribosome, a large ribonucleoprotein complex responsible for the synthesis of proteins in the cell. The small ribosomal subunit (SSU) binds messenger RNAs (mRNAs) and translates the encoded message by selecting cognate aminoacyl-transfer RNA (tRNA) molecules. The large subunit (LSU) contains the ribosomal catalytic site termed the peptidyl transferase center (PTC), which catalyzes the formation of peptide bonds, thereby polymerizing the amino acids delivered by tRNAs into a polypeptide chain. The nascent polypeptides leave the ribosome through a tunnel in the LSU and interact with protein factors that function in enzymatic processing, targeting, and the membrane insertion of nascent chains at the exit of the ribosomal tunnel. This is Small ribosomal subunit protein eS27B from Saccharomyces cerevisiae (strain ATCC 204508 / S288c) (Baker's yeast).